A 231-amino-acid chain; its full sequence is Ribose-5-phosphate isomerase A (231 aa).

Residues 28-31 (TGST), 83-86 (DGAD), and 96-99 (KGGG) each bind substrate. Glu-105 functions as the Proton acceptor in the catalytic mechanism. Residue Lys-123 coordinates substrate.

This sequence belongs to the ribose 5-phosphate isomerase family. As to quaternary structure, homodimer.

It catalyses the reaction aldehydo-D-ribose 5-phosphate = D-ribulose 5-phosphate. It functions in the pathway carbohydrate degradation; pentose phosphate pathway; D-ribose 5-phosphate from D-ribulose 5-phosphate (non-oxidative stage): step 1/1. Catalyzes the reversible conversion of ribose-5-phosphate to ribulose 5-phosphate. The polypeptide is Ribose-5-phosphate isomerase A (Agrobacterium fabrum (strain C58 / ATCC 33970) (Agrobacterium tumefaciens (strain C58))).